We begin with the raw amino-acid sequence, 283 residues long: Elongation factor Ts (283 aa).

The segment at 79-82 is involved in Mg(2+) ion dislocation from EF-Tu; it reads TDFV.

The protein belongs to the EF-Ts family.

The protein localises to the cytoplasm. Its function is as follows. Associates with the EF-Tu.GDP complex and induces the exchange of GDP to GTP. It remains bound to the aminoacyl-tRNA.EF-Tu.GTP complex up to the GTP hydrolysis stage on the ribosome. In Shewanella frigidimarina (strain NCIMB 400), this protein is Elongation factor Ts.